Here is a 203-residue protein sequence, read N- to C-terminus: Guanylate kinase (203 aa).

One can recognise a Guanylate kinase-like domain in the interval 3–181; sequence GTLYIVAAPS…AVSEMCAIFT (179 aa). 10 to 17 is an ATP binding site; the sequence is APSGAGKS.

This sequence belongs to the guanylate kinase family.

The protein localises to the cytoplasm. It carries out the reaction GMP + ATP = GDP + ADP. In terms of biological role, essential for recycling GMP and indirectly, cGMP. The sequence is that of Guanylate kinase from Xanthomonas campestris pv. campestris (strain 8004).